The following is a 931-amino-acid chain: Netrin receptor UNC5C (931 aa).

A signal peptide spans 1–40; the sequence is MRKGLRATAARCGLGLGYLLQMLVLPALALLSASGTGSAA. The Extracellular segment spans residues 41–380; sequence QDDDFFHELP…APDSDDVALY (340 aa). One can recognise an Ig-like domain in the interval 62–159; that stretch reads PHFLIEPEEA…AGTTKSRKAY (98 aa). 9 disulfide bridges follow: Cys83–Cys144, Cys95–Cys142, Cys188–Cys239, Cys272–Cys309, Cys276–Cys313, Cys287–Cys299, Cys328–Cys362, Cys332–Cys367, and Cys340–Cys352. An Ig-like C2-type domain is found at 161 to 256; it reads RIAYLRKTFE…KRKSTTATVI (96 aa). A glycan (N-linked (GlcNAc...) asparagine) is linked at Asn236. TSP type-1 domains are found at residues 260–314 and 316–368; these read NGGW…TLCP and DGRW…GLCM. A glycan (N-linked (GlcNAc...) asparagine) is linked at Asn361. The helical transmembrane segment at 381-401 threads the bilayer; it reads VGIVIAVIVCLAISVVVALFV. At 402 to 931 the chain is on the cytoplasmic side; sequence YRKNHRDFES…VVSLAAEGQY (530 aa). The tract at residues 402–931 is required for netrin-mediated axon repulsion of neuronal growth cones; it reads YRKNHRDFES…VVSLAAEGQY (530 aa). Position 502 is a phosphoserine (Ser502). The region spanning 530-673 is the ZU5 domain; the sequence is CTAFGSFNSL…LSTYALVGHS (144 aa). Tyr568 carries the phosphotyrosine modification. The interval 694–712 is interaction with DCC; the sequence is SLEYSIRVYCLDDTQDALK. Residues 850–929 enclose the Death domain; that stretch reads QKLCSSLDAP…ETVVSLAAEG (80 aa).

Belongs to the unc-5 family. As to quaternary structure, interacts with DCC (via cytoplasmic domain). Interacts (tyrosine phosphorylated form) with PTPN11. Interacts (via extracellular domain) with FLRT3 (via extracellular domain). Interacts (via Ig-like C2-type domain) with DSCAM (via extracellular domain). Interacts (via death domain) with DAPK1. Interacts (via cytoplasmic domain) with TUBB3; this interaction is decreased by NTN1/Netrin-1. Post-translationally, proteolytically cleaved by caspases during apoptosis. The cleavage does not take place when the receptor is associated with netrin ligand. Its cleavage by caspases is required to induce apoptosis. Phosphorylated on different cytoplasmic tyrosine residues. Phosphorylation of Tyr-568 leads to an interaction with PTPN11 phosphatase, suggesting that its activity is regulated by phosphorylation/dephosphorylation. Tyrosine phosphorylation is netrin-dependent. As to expression, mainly expressed in brain. Expressed in temporal lobe cortical neurons and in neurons of the hippocampal pyramidal layer. Also expressed in kidney. Not expressed in developing or adult lung.

Its subcellular location is the cell membrane. It is found in the cell surface. It localises to the synapse. The protein resides in the synaptosome. The protein localises to the cell projection. Its subcellular location is the axon. It is found in the dendrite. It localises to the growth cone. The protein resides in the lamellipodium. The protein localises to the filopodium. Functionally, receptor for netrin required for axon guidance. Mediates axon repulsion of neuronal growth cones in the developing nervous system upon ligand binding. NTN1/Netrin-1 binding might cause dissociation of UNC5C from polymerized TUBB3 in microtubules and thereby lead to increased microtubule dynamics and axon repulsion. Axon repulsion in growth cones may also be caused by its association with DCC that may trigger signaling for repulsion. Might also collaborate with DSCAM in NTN1-mediated axon repulsion independently of DCC. Also involved in corticospinal tract axon guidance independently of DCC. Involved in dorsal root ganglion axon projection towards the spinal cord. It also acts as a dependence receptor required for apoptosis induction when not associated with netrin ligand. The protein is Netrin receptor UNC5C (UNC5C) of Homo sapiens (Human).